The following is a 388-amino-acid chain: MNLHEYQAKQLFARYGLPAPVGYACTTPREAEEAASKIGAGPWVVKCQVHAGGRGKAGGVKVVNSKEDIRAFAENWLGKRLVTYQTDANGQPVNQILVEAATDIGKELYLGAVVDRSSRRVVFMASTEGGVEIEKVAEETPHLIHKVALDPLTGPMPYQGRELAFKLGLEGKLVQQFTKIFMGLATIFLERDLALIEINPLVITKQGDLICLDGKLGADGNALFRQPDLREMRDQSQEDPREAQAAQWELNYVALDGNIGCMVNGAGLAMGTMDIVKLHGGEPANFLDVGGGATKERVTEAFKIILSDDNVKAVLVNIFGGIVRCDLIADGIIGAVEEVGVNVPVVVRLEGNNAELGAKKLADSGLNIIAAKSLTDAAQQVVAAVEGK.

The 236-residue stretch at 9-244 folds into the ATP-grasp domain; sequence KQLFARYGLP…QSQEDPREAQ (236 aa). ATP is bound by residues K46, 53–55, E99, T102, and E107; that span reads GRG. Residues N199 and D213 each contribute to the Mg(2+) site. Residues N264 and 321-323 contribute to the substrate site; that span reads GIV.

The protein belongs to the succinate/malate CoA ligase beta subunit family. In terms of assembly, heterotetramer of two alpha and two beta subunits. Mg(2+) is required as a cofactor.

The enzyme catalyses succinate + ATP + CoA = succinyl-CoA + ADP + phosphate. It carries out the reaction GTP + succinate + CoA = succinyl-CoA + GDP + phosphate. It functions in the pathway carbohydrate metabolism; tricarboxylic acid cycle; succinate from succinyl-CoA (ligase route): step 1/1. Its function is as follows. Succinyl-CoA synthetase functions in the citric acid cycle (TCA), coupling the hydrolysis of succinyl-CoA to the synthesis of either ATP or GTP and thus represents the only step of substrate-level phosphorylation in the TCA. The beta subunit provides nucleotide specificity of the enzyme and binds the substrate succinate, while the binding sites for coenzyme A and phosphate are found in the alpha subunit. The protein is Succinate--CoA ligase [ADP-forming] subunit beta of Salmonella arizonae (strain ATCC BAA-731 / CDC346-86 / RSK2980).